Here is a 193-residue protein sequence, read N- to C-terminus: Outer membrane lipoprotein DolP (193 aa).

The N-terminal stretch at 1–21 (MTLSPLKKLAILLGATIFLQG) is a signal peptide. Cys-22 carries the N-palmitoyl cysteine lipid modification. The S-diacylglycerol cysteine moiety is linked to residue Cys-22. BON domains lie at 48-117 (DDET…TVSP) and 126-193 (KDSW…KYLD).

The protein belongs to the lipoprotein DolP family.

The protein localises to the cell outer membrane. Plays an important role in maintaining outer membrane integrity. This Haemophilus influenzae (strain ATCC 51907 / DSM 11121 / KW20 / Rd) protein is Outer membrane lipoprotein DolP.